Reading from the N-terminus, the 352-residue chain is Peptide chain release factor 1 (352 aa).

Gln233 bears the N5-methylglutamine mark. Residues 288 to 309 (NAKDRKEQVGSGDRSERIRTYN) form a disordered region. Residues 289–306 (AKDRKEQVGSGDRSERIR) are compositionally biased toward basic and acidic residues.

It belongs to the prokaryotic/mitochondrial release factor family. In terms of processing, methylated by PrmC. Methylation increases the termination efficiency of RF1.

Its subcellular location is the cytoplasm. In terms of biological role, peptide chain release factor 1 directs the termination of translation in response to the peptide chain termination codons UAG and UAA. The protein is Peptide chain release factor 1 (prfA) of Helicobacter pylori (strain ATCC 700392 / 26695) (Campylobacter pylori).